Here is a 78-residue protein sequence, read N- to C-terminus: Pro-glucagon (78 aa).

Belongs to the glucagon family.

It is found in the secreted. Plays a key role in glucose metabolism and homeostasis. Regulates blood glucose by increasing gluconeogenesis and decreasing glycolysis. This is Pro-glucagon (gcg) from Atractosteus spatula (Alligator gar).